The chain runs to 418 residues: MSVAEQIRTIAAEARQASFAMAKLSSAAKDQLLLDMALALINAAPHIIEENKKDLEAGQKRGLSAAMLDRLMLDEARVKGMADAIREVAQLPDPVGEVTGMWKRPNDLMVGKMRIPLGVIGIIYESRPNVTSDAAALCLKSGNAVVLRGGSEAIHSNLAIATILKAQLAKHGIPAAALSLIPFVEREGVTEMLKQEEFIDVIIPRGGESLIRFVVENSKIPVIKHYKGVCHIFVDATADFEMAREIIVNAKTQRPGVCNALETLLIHKDIAETFVPFIYEALTTLKVELRGDKTFRQFAPKAAKATEEDWYAEYLELILAAAVVDGLDAAIDHINRYSSLHTESIITGDYANSQRFIREVNSGVVMVNASTRFSDGNQLGLGAEIGISTTKLHSFGPMGLTDLTTTKFIVYGSGQVRP.

It belongs to the gamma-glutamyl phosphate reductase family.

Its subcellular location is the cytoplasm. It catalyses the reaction L-glutamate 5-semialdehyde + phosphate + NADP(+) = L-glutamyl 5-phosphate + NADPH + H(+). Its pathway is amino-acid biosynthesis; L-proline biosynthesis; L-glutamate 5-semialdehyde from L-glutamate: step 2/2. Catalyzes the NADPH-dependent reduction of L-glutamate 5-phosphate into L-glutamate 5-semialdehyde and phosphate. The product spontaneously undergoes cyclization to form 1-pyrroline-5-carboxylate. This Geobacter sp. (strain M21) protein is Gamma-glutamyl phosphate reductase.